Here is a 287-residue protein sequence, read N- to C-terminus: 4-hydroxybenzoate octaprenyltransferase (287 aa).

7 helical membrane-spanning segments follow: residues 30-50 (ALWIASDGHPAPSLVVIFALG), 92-112 (IAIAVGLALVSFLLILPLNGL), 133-153 (FFAIPQAYLGIAFGFGIPMAF), 158-178 (DTVPMIAWAMLAANVFWSVAY), 207-227 (VLAIMLCYAAMLGIYVWLGAA), 232-252 (WPYWAGWAAAAGCSIYHYTLI), and 266-286 (HNNWLGGVLFAGIAAHYALAV).

Belongs to the UbiA prenyltransferase family. It depends on Mg(2+) as a cofactor.

The protein resides in the cell inner membrane. It carries out the reaction all-trans-octaprenyl diphosphate + 4-hydroxybenzoate = 4-hydroxy-3-(all-trans-octaprenyl)benzoate + diphosphate. Its pathway is cofactor biosynthesis; ubiquinone biosynthesis. Functionally, catalyzes the prenylation of para-hydroxybenzoate (PHB) with an all-trans polyprenyl group. Mediates the second step in the final reaction sequence of ubiquinone-8 (UQ-8) biosynthesis, which is the condensation of the polyisoprenoid side chain with PHB, generating the first membrane-bound Q intermediate 3-octaprenyl-4-hydroxybenzoate. This Burkholderia mallei (strain NCTC 10247) protein is 4-hydroxybenzoate octaprenyltransferase.